The following is a 545-amino-acid chain: Membrane protein insertase YidC (545 aa).

The next 4 membrane-spanning stretches (helical) occupy residues 350 to 370 (IIGNWGWAIIVLTIIVKAVLY), 424 to 444 (LPMLLQIPVFIGLYWALFASV), 461 to 481 (ADPYYILPIIMAATMFAQTYL), and 498 to 518 (PLVFSVMFFFFPAGLVLYWVI).

Belongs to the OXA1/ALB3/YidC family. Type 1 subfamily. As to quaternary structure, interacts with the Sec translocase complex via SecD. Specifically interacts with transmembrane segments of nascent integral membrane proteins during membrane integration.

The protein localises to the cell inner membrane. Functionally, required for the insertion and/or proper folding and/or complex formation of integral membrane proteins into the membrane. Involved in integration of membrane proteins that insert both dependently and independently of the Sec translocase complex, as well as at least some lipoproteins. Aids folding of multispanning membrane proteins. The chain is Membrane protein insertase YidC from Neisseria meningitidis serogroup A / serotype 4A (strain DSM 15465 / Z2491).